Here is a 208-residue protein sequence, read N- to C-terminus: TM2 domain-containing protein 1 (208 aa).

An N-terminal signal peptide occupies residues 1 to 37 (MAAAWPAGRASPAAGPPGLLRTLWLVTVAAGHCGAAA). Over 38-129 (SGAVGGEETP…YSYKVAVALS (92 aa)) the chain is Extracellular. N-linked (GlcNAc...) asparagine glycans are attached at residues Asn-73, Asn-76, and Asn-97. One can recognise a TM2 domain in the interval 119-167 (GYSYKVAVALSLFLGWLGADRFYLGYPALGLLKFCTVGFCGIGSLIDFI). The chain crosses the membrane as a helical span at residues 130-150 (LFLGWLGADRFYLGYPALGLL). The Cytoplasmic segment spans residues 151 to 154 (KFCT). Residues 155–175 (VGFCGIGSLIDFILISMQIVG) traverse the membrane as a helical segment. Topologically, residues 176–208 (PSDGSSYIIDYYGTRLTRLSITNETFRKTQLYP) are extracellular. The N-linked (GlcNAc...) asparagine glycan is linked to Asn-198.

This sequence belongs to the TM2 family. In terms of assembly, interacts with APP beta-APP42 (amyloid-beta protein 42). In terms of processing, N-glycosylated.

The protein resides in the membrane. May participate in amyloid-beta-induced apoptosis via its interaction with beta-APP42. The polypeptide is TM2 domain-containing protein 1 (Tm2d1) (Mus musculus (Mouse)).